A 150-amino-acid polypeptide reads, in one-letter code: Small ribosomal subunit protein uS9 (150 aa).

It belongs to the universal ribosomal protein uS9 family.

This Mycolicibacterium smegmatis (strain ATCC 700084 / mc(2)155) (Mycobacterium smegmatis) protein is Small ribosomal subunit protein uS9.